Reading from the N-terminus, the 174-residue chain is Adipose-secreted signaling protein (174 aa).

Residue Ala-2 is modified to N-acetylalanine. A Phosphothreonine modification is found at Thr-147.

The protein belongs to the ADISSP family.

It localises to the secreted. Adipocyte-secreted protein (adipokine) that acts as a key regulator for white adipose tissue (WAT) thermogenesis and glucose homeostasis at least in part through activation of protein kinase A (PKA). The chain is Adipose-secreted signaling protein from Homo sapiens (Human).